Here is a 1145-residue protein sequence, read N- to C-terminus: DNA-directed RNA polymerase subunit beta (1145 aa).

The span at 1101-1112 (LPEERRVSSSKE) shows a compositional bias: basic and acidic residues. The segment at 1101-1145 (LPEERRVSSSKEEIEEEEEVEDNSDEFDETFLEEAEDDFSLDDED) is disordered. The span at 1113-1145 (EIEEEEEVEDNSDEFDETFLEEAEDDFSLDDED) shows a compositional bias: acidic residues.

This sequence belongs to the RNA polymerase beta chain family. As to quaternary structure, the RNAP catalytic core consists of 2 alpha, 1 beta, 1 beta' and 1 omega subunit. When a sigma factor is associated with the core the holoenzyme is formed, which can initiate transcription.

The enzyme catalyses RNA(n) + a ribonucleoside 5'-triphosphate = RNA(n+1) + diphosphate. Its function is as follows. DNA-dependent RNA polymerase catalyzes the transcription of DNA into RNA using the four ribonucleoside triphosphates as substrates. The protein is DNA-directed RNA polymerase subunit beta of Desulforamulus reducens (strain ATCC BAA-1160 / DSM 100696 / MI-1) (Desulfotomaculum reducens).